The primary structure comprises 50 residues: Sproutin (50 aa).

Phosphoserine; by PKC is present on Ser-8.

As to expression, brain.

Neurite outgrowth factor. This is Sproutin from Rattus norvegicus (Rat).